The chain runs to 705 residues: Ion-translocating oxidoreductase complex subunit C (705 aa).

4Fe-4S ferredoxin-type domains are found at residues 368–397 (MGET…QQLY) and 407–435 (KATA…LVQY). 8 residues coordinate [4Fe-4S] cluster: cysteine 377, cysteine 380, cysteine 383, cysteine 387, cysteine 416, cysteine 419, cysteine 422, and cysteine 426. Positions 536–684 (RARQAENIPA…EPVDPRKAAV (149 aa)) are disordered.

This sequence belongs to the 4Fe4S bacterial-type ferredoxin family. RnfC subfamily. The complex is composed of six subunits: RnfA, RnfB, RnfC, RnfD, RnfE and RnfG. The cofactor is [4Fe-4S] cluster.

The protein resides in the cell inner membrane. Its function is as follows. Part of a membrane-bound complex that couples electron transfer with translocation of ions across the membrane. This is Ion-translocating oxidoreductase complex subunit C from Citrobacter koseri (strain ATCC BAA-895 / CDC 4225-83 / SGSC4696).